The chain runs to 4080 residues: Hybrid PKS-NRPS synthetase poxE (4080 aa).

The Ketosynthase family 3 (KS3) domain occupies Arg8–Ala442. Catalysis depends on for beta-ketoacyl synthase activity residues Cys181, His320, and His362. The tract at residues Val554–Met878 is malonyl-CoA:ACP transacylase (MAT) domain. The segment at His944 to Val1078 is N-terminal hotdog fold. A PKS/mFAS DH domain is found at His944–Asp1246. The dehydratase (DH) domain stretch occupies residues Pro945–Thr1243. His976 (proton acceptor; for dehydratase activity) is an active-site residue. The C-terminal hotdog fold stretch occupies residues Met1093–Asp1246. Asp1152 acts as the Proton donor; for dehydratase activity in catalysis. The tract at residues His1400–Asp1585 is methyltransferase (MT) domain. Residues Thr2118–Ile2292 form a ketoreductase (KR)domain region. The interval Thr2399–Leu2478 is peptidyl carrier protein. The region spanning Glu2405–Leu2481 is the Carrier 1 domain. The residue at position 2441 (Ser2441) is an O-(pantetheine 4'-phosphoryl)serine. Residues Ser2488–Glu2569 are disordered. The span at Val2511 to Ile2525 shows a compositional bias: basic and acidic residues. The segment covering Ser2528–Ser2545 has biased composition (low complexity). Over residues Asp2551–Ile2565 the composition is skewed to polar residues. A condensation region spans residues Lys2607 to Ser3036. An adenylation region spans residues Asp3069–Ile3478. Residues Ala3593 to Glu3673 form the Carrier 2 domain. The segment at Ala3598 to Lys3670 is thiolation. The residue at position 3633 (Ser3633) is an O-(pantetheine 4'-phosphoryl)serine. The reductase (RED) domain stretch occupies residues Leu3740–Arg3959.

In the C-terminal section; belongs to the NRP synthetase family.

It functions in the pathway secondary metabolite biosynthesis. In terms of biological role, hybrid PKS-NRPS synthetase; part of the gene cluster that mediates the biosynthesis of oxaleimides, cytotoxic compounds containing an unusual disubstituted succinimide moiety. The first step of the pathway is provided by the HR-PKS poxF that serves in a new mode of collaborative biosynthesis with the PKS-NRPS poxE, by providing the olefin containing amino acid substrate via the synthesis of an ACP-bound dec-4-enoate. The cytochrome P450 monooxygenase poxM-catalyzed oxidation at the alpha-position creates the enzyme-bound 2-hydroxydec-4-enoyl-ACP thioester, which may be prone to spontaneous hydrolysis to yield 2-hydroxydec-4-enoic acid due to increased electrophilicity of the carbonyl. 2-hydroxydec-4-enoic acid can then be further oxidized by poxM to yield the alpha-ketoacid 2-oxodec-4-enoicacid, which is reductively aminated by the aminotransferase poxL to yield (S,E)-2-aminodec-4-enoic acid. The Hybrid PKS-NRPS synthetase poxE then performs condensation between the octaketide product of its PKS modules and the amino group of (S,E)-2-aminodec-4-enoic acid which is activated and incorporated by the adenylation domain. The resulting aminoacyl product can be cyclized by the Diels-Alderase PoxQ and reductively released by the reductive (R) domain of poxE to yield an aldehyde intermediate. The released aldehyde is then substrate for a Knoevenagel condensation by the hydrolyase poxO followed by an oxidation at the 5-position of the pyrrolidone ring. The presence of the olefin from the amino acid building block allows for migration of the substituted allyl group to occur. This allylic transposition reaction takes place in a conjugate addition, semipinacol-like fashion to yield a succinimide intermediate. Iterative two-electron oxidations of the C7 methyl of the succinimide intermediate to the carboxylic acid can be catalyzed by one of two remaining cytochrome P450 monooxygenasess poxC or poxD to yield oxaleimide A. Subsequent oxidation yields the maleimide scaffold oxaleimide I. Both oxaleimide A and oxaleimide I can undergo oxidative modifications in the decalin ring to yield the series of products oxaleimides B to H. The sequence is that of Hybrid PKS-NRPS synthetase poxE from Penicillium oxalicum.